Here is a 315-residue protein sequence, read N- to C-terminus: MAESLMDIKRRIASTKKTGQITSAMQMVSGAKLSQIEKNSVAYQVYTDKIREIVTHLAASQLIDIARQKSSLQAEPADSTIKKAIKHEVTLSNLLVERPIKKTGYLVITSDRGLVGAYNSSILKAMVQMISETHQSPDEYAILAVGGTGADFFKARGMNLTYEYRGVSDVPSFEEVKQIIKTAVAMYDNGVYDELYVCYNHHVNSLTSGFRAEKMLPITDLDVSEVADQNLEYITEPSVDDALDAILPQYAESLIYGAMLDSKTAEHAASMAAMKSATDNANNLISELSIKYNRARQAQITTEITEIVGGAAALE.

This sequence belongs to the ATPase gamma chain family. In terms of assembly, F-type ATPases have 2 components, CF(1) - the catalytic core - and CF(0) - the membrane proton channel. CF(1) has five subunits: alpha(3), beta(3), gamma(1), delta(1), epsilon(1). CF(0) has three main subunits: a, b and c.

It is found in the cell membrane. Functionally, produces ATP from ADP in the presence of a proton gradient across the membrane. The gamma chain is believed to be important in regulating ATPase activity and the flow of protons through the CF(0) complex. This is ATP synthase gamma chain from Latilactobacillus sakei subsp. sakei (strain 23K) (Lactobacillus sakei subsp. sakei).